Reading from the N-terminus, the 303-residue chain is Coenzyme PQQ synthesis protein B (303 aa).

It belongs to the PqqB family.

Its pathway is cofactor biosynthesis; pyrroloquinoline quinone biosynthesis. May be involved in the transport of PQQ or its precursor to the periplasm. The sequence is that of Coenzyme PQQ synthesis protein B from Acinetobacter baumannii (strain SDF).